Consider the following 144-residue polypeptide: Large ribosomal subunit protein uL15 (144 aa).

The interval 1–54 is disordered; the sequence is MRLNTLSPAPGRVTSRKRVGRGIGSGLGKTAGRGHKGLKSRSGGTVKPGFEGGQ. Gly residues predominate over residues 21 to 31; that stretch reads RGIGSGLGKTA.

Belongs to the universal ribosomal protein uL15 family. In terms of assembly, part of the 50S ribosomal subunit.

In terms of biological role, binds to the 23S rRNA. This is Large ribosomal subunit protein uL15 from Teredinibacter turnerae (strain ATCC 39867 / T7901).